Consider the following 143-residue polypeptide: Nucleoside diphosphate kinase (143 aa).

ATP contacts are provided by Lys11, Phe59, Arg87, Thr93, Arg104, and Asn114. Catalysis depends on His117, which acts as the Pros-phosphohistidine intermediate.

The protein belongs to the NDK family. As to quaternary structure, homotetramer. It depends on Mg(2+) as a cofactor.

It is found in the cytoplasm. It catalyses the reaction a 2'-deoxyribonucleoside 5'-diphosphate + ATP = a 2'-deoxyribonucleoside 5'-triphosphate + ADP. The enzyme catalyses a ribonucleoside 5'-diphosphate + ATP = a ribonucleoside 5'-triphosphate + ADP. Major role in the synthesis of nucleoside triphosphates other than ATP. The ATP gamma phosphate is transferred to the NDP beta phosphate via a ping-pong mechanism, using a phosphorylated active-site intermediate. The sequence is that of Nucleoside diphosphate kinase from Colwellia psychrerythraea (strain 34H / ATCC BAA-681) (Vibrio psychroerythus).